We begin with the raw amino-acid sequence, 264 residues long: 4-oxalocrotonate decarboxylase (264 aa).

It belongs to the hydratase/decarboxylase family.

The enzyme catalyses (3E)-2-oxohex-3-enedioate + H(+) = 2-oxopent-4-enoate + CO2. Its pathway is xenobiotic degradation; toluene degradation. The protein is 4-oxalocrotonate decarboxylase (xylI) of Pseudomonas putida (Arthrobacter siderocapsulatus).